A 440-amino-acid chain; its full sequence is Protein C-ets-1 (440 aa).

N6-acetyllysine; alternate is present on residues Lys8 and Lys15. Residues Lys8 and Lys15 each participate in a glycyl lysine isopeptide (Lys-Gly) (interchain with G-Cter in SUMO2); alternate cross-link. Lys15 participates in a covalent cross-link: Glycyl lysine isopeptide (Lys-Gly) (interchain with G-Cter in SUMO); alternate. A Phosphothreonine; by MAPK modification is found at Thr38. The PNT domain maps to 51–136 (ATFSGFTKEQ…EHLEILQKED (86 aa)). The interval 130–243 (EILQKEDVKP…DNMCLGRASR (114 aa)) is activation domain; required for transcription activation. A Glycyl lysine isopeptide (Lys-Gly) (interchain with G-Cter in SUMO2) cross-link involves residue Lys138. Tyr223 carries the phosphotyrosine modification. Lys227 participates in a covalent cross-link: Glycyl lysine isopeptide (Lys-Gly) (interchain with G-Cter in SUMO). A Phosphoserine; by CaMK2 modification is found at Ser251. Phosphoserine is present on Ser254. Residue Thr265 is modified to Phosphothreonine. Ser267 and Ser270 each carry phosphoserine. A phosphoserine; by CaMK2 mark is found at Ser282 and Ser285. Residues 304–312 (FKDYVRDRA) form a helix HI-1 region. Residue Lys305 is modified to N6-acetyllysine. The segment at 323–330 (AAALAGYT) is helix HI-2. Residues 335–415 (IQLWQFLLEL…AGKRYVYRFV (81 aa)) constitute a DNA-binding region (ETS). A helix H4 region spans residues 418 to 422 (LQSLL). The interval 426-432 (PEELHAM) is helix H5.

Belongs to the ETS family. In terms of assembly, binds DNA as a homodimer; homodimerization is required for transcription activation. Interacts with MAF and MAFB. Interacts with PAX5; the interaction alters DNA-binding properties. Interacts with DAXX. Interacts with UBE2I. Interacts with SP100; the interaction is direct and modulates ETS1 transcriptional activity. Phosphorylation at Ser-251, Ser-282 and Ser-285 by CaMK2/CaMKII in response to calcium signaling decreases affinity for DNA: an increasing number of phosphoserines causes DNA-binding to become progressively weaker. In terms of processing, sumoylated on Lys-15 and Lys-227, preferentially with SUMO2; which inhibits transcriptional activity. Post-translationally, ubiquitinated; which induces proteasomal degradation.

It is found in the nucleus. Its subcellular location is the cytoplasm. Its activity is regulated as follows. Autoinhibited by a module composed of four alpha helices (HI-1, HI-2, H4, and H5) that flank the DNA-binding ETS domain, reducing the affinity for DNA. Phosphorylation by CaMK2/CaMKII in response to calcium signaling decreases affinity for DNA. Transcription factor. Directly controls the expression of cytokine and chemokine genes in a wide variety of different cellular contexts. May control the differentiation, survival and proliferation of lymphoid cells. May also regulate angiogenesis through regulation of expression of genes controlling endothelial cell migration and invasion. The sequence is that of Protein C-ets-1 (Ets1) from Mus musculus (Mouse).